The following is a 133-amino-acid chain: Small ribosomal subunit protein uS8 (133 aa).

The protein belongs to the universal ribosomal protein uS8 family. In terms of assembly, part of the 30S ribosomal subunit. Contacts proteins S5 and S12.

Its function is as follows. One of the primary rRNA binding proteins, it binds directly to 16S rRNA central domain where it helps coordinate assembly of the platform of the 30S subunit. This chain is Small ribosomal subunit protein uS8, found in Orientia tsutsugamushi (strain Ikeda) (Rickettsia tsutsugamushi).